A 118-amino-acid chain; its full sequence is MKRIAFVFSTAPHGSASGREGLDALLATSALTEALGVFFISDGVFQLLPGQKPDAVLARDYIATFKLFDLYDIDQCWICAASLRERGLKNVNFVVDATPLEPVALRRELGNYDVILRF.

Belongs to the DsrF/TusC family. Heterohexamer, formed by a dimer of trimers. The hexameric TusBCD complex contains 2 copies each of TusB, TusC and TusD. The TusBCD complex interacts with TusE.

Its subcellular location is the cytoplasm. Part of a sulfur-relay system required for 2-thiolation of 5-methylaminomethyl-2-thiouridine (mnm(5)s(2)U) at tRNA wobble positions. This chain is Protein TusC, found in Salmonella arizonae (strain ATCC BAA-731 / CDC346-86 / RSK2980).